Consider the following 322-residue polypeptide: Methionyl-tRNA formyltransferase (322 aa).

Residue 113–116 (SLLP) coordinates (6S)-5,6,7,8-tetrahydrofolate.

This sequence belongs to the Fmt family.

The catalysed reaction is L-methionyl-tRNA(fMet) + (6R)-10-formyltetrahydrofolate = N-formyl-L-methionyl-tRNA(fMet) + (6S)-5,6,7,8-tetrahydrofolate + H(+). In terms of biological role, attaches a formyl group to the free amino group of methionyl-tRNA(fMet). The formyl group appears to play a dual role in the initiator identity of N-formylmethionyl-tRNA by promoting its recognition by IF2 and preventing the misappropriation of this tRNA by the elongation apparatus. The protein is Methionyl-tRNA formyltransferase of Blochmanniella pennsylvanica (strain BPEN).